A 553-amino-acid polypeptide reads, in one-letter code: 4-coumarate--CoA ligase (553 aa).

ATP is bound by residues Ser-198, Ser-199, Gly-200, Thr-201, Thr-202, and Lys-206. 2 residues coordinate (E)-4-coumaroyl-AMP: Tyr-248 and Ser-252. Residue Lys-269 coordinates CoA. The SBD1 stretch occupies residues 271 to 340 (EIVPFLELIQ…AKFPNAKLGQ (70 aa)). Positions 318, 340, 341, 345, and 353 each coordinate (E)-4-coumaroyl-AMP. Gln-340, Gly-341, and Thr-345 together coordinate ATP. An SBD2 region spans residues 341–408 (GYGMTEAGPV…IRGDQIMKGY (68 aa)). Residues Asp-429 and Arg-444 each contribute to the ATP site. Residues Lys-446 and Lys-450 each coordinate (E)-4-coumaroyl-AMP. 2 residues coordinate CoA: Lys-452 and Gly-453. ATP is bound at residue Lys-535.

The protein belongs to the ATP-dependent AMP-binding enzyme family. It depends on Mg(2+) as a cofactor.

It catalyses the reaction (E)-4-coumarate + ATP + CoA = (E)-4-coumaroyl-CoA + AMP + diphosphate. The catalysed reaction is (E)-4-coumarate + ATP + H(+) = (E)-4-coumaroyl-AMP + diphosphate. The enzyme catalyses (E)-4-coumaroyl-AMP + CoA = (E)-4-coumaroyl-CoA + AMP + H(+). It participates in phytoalexin biosynthesis; 3,4',5-trihydroxystilbene biosynthesis; 3,4',5-trihydroxystilbene from trans-4-coumarate: step 1/2. Its function is as follows. Carboxylate--CoA ligase that may use 4-coumarate as substrate. Follows a two-step reaction mechanism, wherein the carboxylate substrate first undergoes adenylation by ATP, followed by a thioesterification in the presence of CoA to yield the final CoA thioester. This Vanilla planifolia (Vanilla) protein is 4-coumarate--CoA ligase.